A 470-amino-acid polypeptide reads, in one-letter code: Pheromone a factor receptor (470 aa).

The Extracellular segment spans residues 1-5 (MSYKS). A helical membrane pass occupies residues 6–23 (AIIGLCLLAVILLAPPLA). Over 24–29 (WHSHTK) the chain is Cytoplasmic. The chain crosses the membrane as a helical span at residues 30–53 (NIPAIILITWLLTMNLTCIVDAAI). The Extracellular portion of the chain corresponds to 54–70 (WSDDDFLTRWDGKGWCD). A helical transmembrane segment spans residues 71-98 (IVIKLQVGANIGISCAVTNIIYNLHTIL). The Cytoplasmic portion of the chain corresponds to 99–116 (KADSVLPDLSSWTKIVKD). Residues 117–134 (LVISLFTPVMVMGFSYLL) form a helical membrane-spanning segment. At 135-155 (QVFRYGIARYNGCQNLLSPTW) the chain is on the extracellular side. The helical transmembrane segment at 156 to 183 (ITTVLYTMWMLIWSFVGAVYATLVLFVF) threads the bilayer. Topologically, residues 184-205 (YKKRKDVRDILHCTNSGLNLTR) are cytoplasmic. A helical membrane pass occupies residues 206-228 (FARLLIFCFIIILVMFPFSVYTF). Residues 229-266 (VQDLQQVEGHYTFKNTHSSTIWNTIIKFDPGRPIYNIW) are Extracellular-facing. A helical membrane pass occupies residues 267 to 285 (LYVLMSYLVFLIFGLGSDA). The Cytoplasmic portion of the chain corresponds to 286–470 (LHMYSKFLRS…EHSSENTAGP (185 aa)). A hydrophilic region spans residues 300–470 (FVLDMWKRFI…EHSSENTAGP (171 aa)). Residues 440–470 (NFEGESLCYSPASKEENSSSNEHSSENTAGP) form a disordered region.

This sequence belongs to the G-protein coupled receptor 4 family.

It localises to the membrane. Functionally, receptor for the peptide pheromone a factor. The sequence is that of Pheromone a factor receptor (STE3) from Saccharomyces cerevisiae (strain ATCC 204508 / S288c) (Baker's yeast).